Consider the following 678-residue polypeptide: Proprotein convertase subtilisin/kexin type 4 (678 aa).

Residues 1–26 (MRPSQTALWLGLVLSLALLAVGWASA) form the signal peptide. Residues 27–110 (RPPIYVSSWA…QQTLRRRVKR (84 aa)) constitute a propeptide that is removed on maturation. The region spanning 123–437 (QWYMNKEIEQ…YGLLDAGLLV (315 aa)) is the Peptidase S8 domain. Active-site charge relay system residues include aspartate 155, histidine 196, and serine 370. A P/Homo B domain is found at 446-580 (TKPQKKCTIR…TLLLYGTAED (135 aa)). The N-linked (GlcNAc...) asparagine glycan is linked to asparagine 472.

The protein belongs to the peptidase S8 family. Furin subfamily. The proPCSK4 form interacts with HSPA5; the interaction takes place at the endoplasmic reticulum. In terms of processing, N-glycosylated. Post-translationally, synthesized in the endoplasmic reticulum as a zymogen, is matured by autocatalytic cleavage between the prodomain and the catalytic domain. In terms of tissue distribution, expressed abundantly in the testis. High levels seen in germ cells but not in Leydig, Sertoli or peritubular cells. Expressed in the pachytene spermatocytes and the round spermatids but not in the elongating spermatids. May be expressed within hormonally stimulated ovaries.

The protein localises to the cytoplasmic vesicle. Its subcellular location is the secretory vesicle. It is found in the acrosome membrane. In terms of biological role, proprotein convertase involved in the processing of hormone and other protein precursors at sites comprised of pairs of basic amino acid residues. In males, important for ADAM2 processing as well as other acrosomal proteins with roles in fertilization and critical for normal fertilization events such as sperm capacitation, acrosome reaction and binding of sperm to zona pellucida. Plays also a role in female fertility, involved in the regulation of trophoblast migration and placental development, may be through the proteolytical processing and activation of proteins such as IGF2. May also participate in folliculogenesis in the ovaries. This chain is Proprotein convertase subtilisin/kexin type 4 (Pcsk4), found in Rattus norvegicus (Rat).